Consider the following 341-residue polypeptide: Ribosomal RNA small subunit methyltransferase H (341 aa).

S-adenosyl-L-methionine is bound by residues 47–49 (GGY), D64, F91, D109, and Q116.

Belongs to the methyltransferase superfamily. RsmH family.

The protein localises to the cytoplasm. It catalyses the reaction cytidine(1402) in 16S rRNA + S-adenosyl-L-methionine = N(4)-methylcytidine(1402) in 16S rRNA + S-adenosyl-L-homocysteine + H(+). Specifically methylates the N4 position of cytidine in position 1402 (C1402) of 16S rRNA. This is Ribosomal RNA small subunit methyltransferase H from Rhizobium etli (strain ATCC 51251 / DSM 11541 / JCM 21823 / NBRC 15573 / CFN 42).